The primary structure comprises 219 residues: Large ribosomal subunit protein uL3 (219 aa).

The protein belongs to the universal ribosomal protein uL3 family. Part of the 50S ribosomal subunit. Forms a cluster with proteins L14 and L19.

Its function is as follows. One of the primary rRNA binding proteins, it binds directly near the 3'-end of the 23S rRNA, where it nucleates assembly of the 50S subunit. The sequence is that of Large ribosomal subunit protein uL3 from Salinispora tropica (strain ATCC BAA-916 / DSM 44818 / JCM 13857 / NBRC 105044 / CNB-440).